Here is a 303-residue protein sequence, read N- to C-terminus: Probable cell division protein WhiA (303 aa).

The H-T-H motif DNA-binding region spans 272–303 (SIQQLADSLSTPLTKSGVNHRLRKINKIADEL).

It belongs to the WhiA family.

In terms of biological role, involved in cell division and chromosome segregation. This is Probable cell division protein WhiA from Streptococcus pneumoniae serotype 4 (strain ATCC BAA-334 / TIGR4).